A 152-amino-acid polypeptide reads, in one-letter code: UPF0266 membrane protein YobD (152 aa).

A run of 3 helical transmembrane segments spans residues 6–26 (LVLI…QFIM), 45–65 (IDSV…VTNH), and 67–87 (ALIT…IFWI).

Belongs to the UPF0266 family.

The protein resides in the cell inner membrane. The sequence is that of UPF0266 membrane protein YobD from Escherichia coli O127:H6 (strain E2348/69 / EPEC).